The chain runs to 204 residues: MGAVTDDEVIRKRLLIDGDGAGDDRRINLLVKSFIKWCNSGSQEEGYSQYQRMLSTLSQCEFSMGKTLLVYDMNLREMENYEKIYKEIECSIAGAHEKIAECKKQILQAKRIRKNRQEYDALAKVIQHHPDRHETLKELEALGKELEHLSHIKESVEDKLELRRKQFHVLLSTIHELQQTLENDEKLSEVEEAQEASMETDPKP.

Gly2 is subject to N-acetylglycine. Phosphothreonine is present on Thr5. Lys36 is subject to N6-acetyllysine. Residues 50–137 (YQRMLSTLSQ…HHPDRHETLK (88 aa)) form an interaction with THOC5 region. The interaction with NIF3L1 stretch occupies residues 105-204 (QILQAKRIRK…EASMETDPKP (100 aa)). Positions 146 to 204 (LEHLSHIKESVEDKLELRRKQFHVLLSTIHELQQTLENDEKLSEVEEAQEASMETDPKP) form a coiled coil. The disordered stretch occupies residues 182-204 (ENDEKLSEVEEAQEASMETDPKP).

It belongs to the THOC7 family. As to quaternary structure, tetramer; as part of a THO-DDX39B complex. Component of the THO subcomplex, which is composed of THOC1, THOC2, THOC3, THOC5, THOC6 and THOC7. Component of the transcription/export (TREX) complex at least composed of ALYREF/THOC4, DDX39B, SARNP/CIP29, CHTOP and the THO subcomplex; in the complex interacts with THOC1, THOC2 and THOC5; forms a coiled-coil dimer with THOC5; together with THOC5 and THOC6, plays a key structural role in the oligomerization of the THO-DDX39B complex. TREX seems to have a dynamic structure involving ATP-dependent remodeling. Interacts with NIF3L1.

The protein localises to the cytoplasm. It is found in the nucleus. It localises to the nucleus speckle. Functionally, component of the THO subcomplex of the TREX complex which is thought to couple mRNA transcription, processing and nuclear export, and which specifically associates with spliced mRNA and not with unspliced pre-mRNA. Required for efficient export of polyadenylated RNA. Plays a key structural role in the oligomerization of the THO-DDX39B complex. TREX is recruited to spliced mRNAs by a transcription-independent mechanism, binds to mRNA upstream of the exon-junction complex (EJC) and is recruited in a splicing- and cap-dependent manner to a region near the 5' end of the mRNA where it functions in mRNA export to the cytoplasm via the TAP/NXF1 pathway. The protein is THO complex subunit 7 homolog (THOC7) of Bos taurus (Bovine).